We begin with the raw amino-acid sequence, 151 residues long: UPF0735 ACT domain-containing protein SERP1207 (151 aa).

In terms of domain architecture, ACT spans 74–149; the sequence is TLILYVNDIV…HVTKVDLISM (76 aa).

It belongs to the UPF0735 family.

This is UPF0735 ACT domain-containing protein SERP1207 from Staphylococcus epidermidis (strain ATCC 35984 / DSM 28319 / BCRC 17069 / CCUG 31568 / BM 3577 / RP62A).